We begin with the raw amino-acid sequence, 995 residues long: UPF0182 protein NFA_45260 (995 aa).

Helical transmembrane passes span 18–38, 63–83, 115–135, 176–196, 211–231, 260–280, and 288–308; these read VLLV…RFTD, IILF…ALLL, FGIG…QSNW, FVAV…FGGL, IQLA…YWFD, KLIL…GVVL, and MAAA…PLVV. The disordered stretch occupies residues 904–957; that stretch reads ATPFGGDPATRPQPGTAPPVVDSTQPPADGGTPQPQTTPPPTGSAAKDAAAAEL. Low complexity-rich tracts occupy residues 927-938 and 946-955; these read TQPPADGGTPQP and GSAAKDAAAA.

This sequence belongs to the UPF0182 family.

The protein resides in the cell membrane. This is UPF0182 protein NFA_45260 from Nocardia farcinica (strain IFM 10152).